The sequence spans 106 residues: uncharacterized protein (106 aa).

This is an uncharacterized protein from Schizosaccharomyces pombe (strain 972 / ATCC 24843) (Fission yeast).